A 624-amino-acid polypeptide reads, in one-letter code: MKGQETRGFQSEVKQLLHLMIHSLYSNKEIFLRELISNASDAADKLRFRALSNPDLYEGDSELRVRVSFDKDKRTLTIADNGVGMNRDEVIDHLGTIAKSGTKSFLESMGSDQAKDSQLIGQFGVGFYSAFIVADKVTVRTRAAGDKPENGVFWESAGEGEYTVADITKNDRGTEITLHLREGEDEFLDDWRVRSIISKYSDHIALPVEIEKREEKDGETVISWEKINKAQALWTRNKSEIKDDEYNEFYKHIAHDFTDPLTWSHNRVEGKQEYTSLLYIPSQAPWDLWNRDHKHGLKLYVQRVFIMDDAEQFMPNYLRFVRGLIDSNDLPLNVSREILQDSTVTRNLRSALTKRVLQMLEKLAKDDAEKYQTFWKQFGLVLKEGPAEDHANQEAIAKLLRFASTHTDSSAQTVSLEDYVSRMKEGQEKIYYITADSYAAAKNSPHLELLRKKGIEVLLLSDRIDEWMMNYLTEFDGKAFQSVAKADESIEKLADEVDENAKEAEKALEPFVERVKTLLGDRVKEVRLTHRLTDTPAIVTTDADEMSTQMAKLFAAAGQSVPEVKYIFELNPDHVLVKRTADTEDEAQFKEWVELLLDQALFAERGTLEDPNQFIRRMNQLLVS.

The segment at 1 to 336 is a; substrate-binding; it reads MKGQETRGFQ…SNDLPLNVSR (336 aa). Positions 337 to 552 are b; the sequence is EILQDSTVTR…ADEMSTQMAK (216 aa). The tract at residues 553 to 624 is c; sequence LFAAAGQSVP…IRRMNQLLVS (72 aa).

Belongs to the heat shock protein 90 family. In terms of assembly, homodimer.

It localises to the cytoplasm. Functionally, molecular chaperone. Has ATPase activity. This is Chaperone protein HtpG from Salmonella paratyphi A (strain ATCC 9150 / SARB42).